The sequence spans 419 residues: Inward rectifier potassium channel 16 (419 aa).

Residues 1–67 (MSYYGSSYRI…MVDIFTTLVD (67 aa)) are Cytoplasmic-facing. The chain crosses the membrane as a helical span at residues 68–94 (TKWRHMFVVFSLSYILSWLIFGSIFWL). Over 95-117 (IALHHGDLLSDPDITPCVDNVHS) the chain is Extracellular. Residues 118–134 (FTAAFLFSLETQTTIGY) constitute an intramembrane region (helical; Pore-forming). The short motif at 131–136 (TIGYGY) is the Selectivity filter element. Residues 135–143 (GYRCVTEEC) lie on the Extracellular side of the membrane. The chain crosses the membrane as a helical span at residues 144–171 (SVAVLTVILQSILSCIINTFIIGAALAK). Residues 172–419 (MATARKRAQT…LNRISMESQM (248 aa)) lie on the Cytoplasmic side of the membrane. A phosphoserine mark is found at Ser358, Ser374, and Ser376.

Belongs to the inward rectifier-type potassium channel (TC 1.A.2.1) family. KCNJ16 subfamily. As to quaternary structure, it forms heteromeric channels with Kir4.1/KCNJ10; this interaction is required for KCNJ16 localization to the basolateral membrane in kidney cells. As a heteromer with KCNJ10, may interact with MAGI1; this interaction may facilitate KCNJ10/KCNJ16 potassium channel expression at the basolateral membrane in kidney cells. May form heteromers with Kir2.1/KCNJ2. Can form heteromeric channels with Kir4.2/KCNJ15. In terms of tissue distribution, expressed in the brain, testis, liver, spleen, kidney, submaxillary gland and adrenals. In the kidney, expressed in the epithelial cells of both proximal and distal convoluted tubules, in the endothelial cells surrounding glomerular capillaries and in the flattened parietal layer of Bowman's capsule.

Its subcellular location is the membrane. The protein resides in the basolateral cell membrane. It catalyses the reaction K(+)(in) = K(+)(out). Channel activity is strongly regulated by variations of cytosolic pH; channels are activated by alkaline and inhibited by acidic pH values. Activated by phosphatidylinositol 4,5 biphosphate (PtdIns(4,5)P2). Inward rectifier potassium channels are characterized by a greater tendency to allow potassium to flow into the cell rather than out of it. Their voltage dependence is regulated by the concentration of extracellular potassium; as external potassium is raised, the voltage range of the channel opening shifts to more positive voltages. The inward rectification is mainly due to the blockage of outward current by internal magnesium. KCNJ16 may be involved in the regulation of fluid and pH balance. In the kidney, together with KCNJ10, mediates basolateral K(+) recycling in distal tubules; this process is critical for Na(+) reabsorption at the tubules. The polypeptide is Inward rectifier potassium channel 16 (Kcnj16) (Rattus norvegicus (Rat)).